A 104-amino-acid polypeptide reads, in one-letter code: uncharacterized protein (104 aa).

The next 2 helical transmembrane spans lie at 45 to 65 (LYGI…IGVF) and 70 to 90 (LYLS…AKGL).

It localises to the membrane. This is an uncharacterized protein from Saccharomyces cerevisiae (strain ATCC 204508 / S288c) (Baker's yeast).